The primary structure comprises 504 residues: Cytochrome P450 2K1 (504 aa).

C447 is a heme binding site.

It belongs to the cytochrome P450 family. Heme is required as a cofactor.

The protein resides in the endoplasmic reticulum membrane. The protein localises to the microsome membrane. The catalysed reaction is an organic molecule + reduced [NADPH--hemoprotein reductase] + O2 = an alcohol + oxidized [NADPH--hemoprotein reductase] + H2O + H(+). This is Cytochrome P450 2K1 (cyp2k1) from Oncorhynchus mykiss (Rainbow trout).